Consider the following 302-residue polypeptide: Proteasome subunit beta (302 aa).

The propeptide at 1-50 is removed in mature form; by autocatalysis; sequence MTITGSRGFPDGYLAPGSSFLDFAAQHAPTIMPGTQPTFDTIPQDIAPHG. Catalysis depends on threonine 51, which acts as the Nucleophile. The segment at 277–302 is disordered; that stretch reads EPGRDGPGNRLPSQGSATIIPESDQS. Residues 287-302 show a composition bias toward polar residues; that stretch reads LPSQGSATIIPESDQS.

Belongs to the peptidase T1B family. The 20S proteasome core is composed of 14 alpha and 14 beta subunits that assemble into four stacked heptameric rings, resulting in a barrel-shaped structure. The two inner rings, each composed of seven catalytic beta subunits, are sandwiched by two outer rings, each composed of seven alpha subunits. The catalytic chamber with the active sites is on the inside of the barrel. Has a gated structure, the ends of the cylinder being occluded by the N-termini of the alpha-subunits. Is capped by the proteasome-associated ATPase, ARC.

It is found in the cytoplasm. The enzyme catalyses Cleavage of peptide bonds with very broad specificity.. Its pathway is protein degradation; proteasomal Pup-dependent pathway. With respect to regulation, the formation of the proteasomal ATPase ARC-20S proteasome complex, likely via the docking of the C-termini of ARC into the intersubunit pockets in the alpha-rings, may trigger opening of the gate for substrate entry. Interconversion between the open-gate and close-gate conformations leads to a dynamic regulation of the 20S proteasome proteolysis activity. Component of the proteasome core, a large protease complex with broad specificity involved in protein degradation. This is Proteasome subunit beta from Jonesia denitrificans (strain ATCC 14870 / DSM 20603 / BCRC 15368 / CIP 55.134 / JCM 11481 / NBRC 15587 / NCTC 10816 / Prevot 55134) (Listeria denitrificans).